Reading from the N-terminus, the 435-residue chain is Glutamyl-tRNA reductase (435 aa).

Residues 49–52, serine 109, 114–116, and glutamine 120 contribute to the substrate site; these read TCNR and ETQ. The active-site Nucleophile is cysteine 50. 189–194 contributes to the NADP(+) binding site; the sequence is GAGEMS.

The protein belongs to the glutamyl-tRNA reductase family. In terms of assembly, homodimer.

The enzyme catalyses (S)-4-amino-5-oxopentanoate + tRNA(Glu) + NADP(+) = L-glutamyl-tRNA(Glu) + NADPH + H(+). Its pathway is porphyrin-containing compound metabolism; protoporphyrin-IX biosynthesis; 5-aminolevulinate from L-glutamyl-tRNA(Glu): step 1/2. In terms of biological role, catalyzes the NADPH-dependent reduction of glutamyl-tRNA(Glu) to glutamate 1-semialdehyde (GSA). The chain is Glutamyl-tRNA reductase from Listeria monocytogenes serovar 1/2a (strain ATCC BAA-679 / EGD-e).